Consider the following 130-residue polypeptide: P antigen family member 5 (130 aa).

2 disordered regions span residues 1–88 (MQAP…TDVE) and 101–130 (DAPGDGPDVREGTLPTFDPTKVLEAGEGQL). A compositionally biased stretch (basic and acidic residues) spans 14 to 26 (TREEVRDMSEHVT). Residues 27 to 42 (RSQSSERGNDQESSQP) show a composition bias toward polar residues. Residues T113 and T116 each carry the phosphothreonine modification.

Belongs to the GAGE family.

This is P antigen family member 5 (PAGE5) from Homo sapiens (Human).